Reading from the N-terminus, the 441-residue chain is MMNKGIVMDIKKHSVVVLTPNGEFITCKRKGDSCMIGEEISFDEQEQKASRFSIPYFLKPASLLVACFLCALLFFYNQPEEKVFAYVSVDINPSLEVSVTKDLRVIDLQACNDDGRRILKELKQWENKQLQEVIRTIIKQSQEDKYLTNDKQVMLTAIAKDKLLEPKLEKVMKELKKEYELKHITVEYQSSTMQVRENAIKAGIGTGVYIKQENEKNKSVTPPATPSNPVENEEERQSQPDSSPDVVPDLSSVKDKKYEKPEYKEQKKIEEQPTKQIKENNGRGSQQENRGNQQENNGRESQQGNNGNQQGNNGRESQQGNNGNQQGNNGRGSQGNNGHQQENNGRGSQGNNGNQQGNNGRGSQGNNGHQQENNGRGSQGNNGNQQGDNGRGSQQGNNGNQQGDNGRGSQKENVGNEQGNNGRGSQQENRGHQQGNEKKNQ.

The Cytoplasmic portion of the chain corresponds to 1 to 53; it reads MMNKGIVMDIKKHSVVVLTPNGEFITCKRKGDSCMIGEEISFDEQEQKASRFS. The RsgI N-terminal anti-sigma domain maps to 3 to 51; the sequence is NKGIVMDIKKHSVVVLTPNGEFITCKRKGDSCMIGEEISFDEQEQKASR. A helical transmembrane segment spans residues 54 to 76; that stretch reads IPYFLKPASLLVACFLCALLFFY. Topologically, residues 77 to 441 are extracellular; that stretch reads NQPEEKVFAY…HQQGNEKKNQ (365 aa). Positions 213–441 are disordered; it reads ENEKNKSVTP…HQQGNEKKNQ (229 aa). A compositionally biased stretch (polar residues) spans 219–230; sequence SVTPPATPSNPV. The segment covering 240-251 has biased composition (low complexity); it reads PDSSPDVVPDLS. Over residues 252 to 281 the composition is skewed to basic and acidic residues; sequence SVKDKKYEKPEYKEQKKIEEQPTKQIKENN. Low complexity-rich tracts occupy residues 282-328, 336-358, and 366-408; these read GRGS…QQGN, NNGHQQENNGRGSQGNNGNQQGN, and NNGH…NGRG. Positions 411 to 428 are enriched in polar residues; it reads KENVGNEQGNNGRGSQQE. Basic and acidic residues predominate over residues 429 to 441; that stretch reads NRGHQQGNEKKNQ.

As to quaternary structure, interacts (via RsgI N-terminal anti-sigma domain) with SigI.

Its subcellular location is the cell membrane. Anti-sigma factor for SigI. Negatively regulates SigI activity through direct interaction. Has no direct effect on virulence gene expression. The sequence is that of Anti-sigma-I factor RsgI from Bacillus anthracis.